We begin with the raw amino-acid sequence, 481 residues long: Tryptophan--tRNA ligase, cytoplasmic (481 aa).

Positions 12–68 constitute a WHEP-TRS domain; that stretch reads SPLELFNSIATQGELVRSLKAGNAPKDEIDSAVKMLLSLKMSYKAAMGEEYKAGCPP. An N6-succinyllysine modification is found at Lys-158. Residues 168–177 carry the 'HIGH' region motif; it reads PSSEAMHLGH. The short motif at 353–357 is the 'KMSKS' region element; sequence KMSAS. Position 355 is a phosphoserine (Ser-355).

The protein belongs to the class-I aminoacyl-tRNA synthetase family. In terms of assembly, homodimer. Interacts with oxidized form of GAPDH. Post-translationally, proteolytic cleavage generates 2 forms; T1-TrpRS and T2-TrpRS. Isoform 2 is widely expressed, isoform 1 is found only in embryonic stem cells.

The protein localises to the cytoplasm. The enzyme catalyses tRNA(Trp) + L-tryptophan + ATP = L-tryptophyl-tRNA(Trp) + AMP + diphosphate + H(+). Catalyzes the attachment of tryptophan to tRNA(Trp) in a two-step reaction: tryptophan is first activated by ATP to form Trp-AMP and then transferred to the acceptor end of the tRNA(Trp). Could also possess an angiostatic activity. The protein is Tryptophan--tRNA ligase, cytoplasmic of Mus musculus (Mouse).